The chain runs to 475 residues: Aspartyl/glutamyl-tRNA(Asn/Gln) amidotransferase subunit B (475 aa).

It belongs to the GatB/GatE family. GatB subfamily. Heterotrimer of A, B and C subunits.

The catalysed reaction is L-glutamyl-tRNA(Gln) + L-glutamine + ATP + H2O = L-glutaminyl-tRNA(Gln) + L-glutamate + ADP + phosphate + H(+). The enzyme catalyses L-aspartyl-tRNA(Asn) + L-glutamine + ATP + H2O = L-asparaginyl-tRNA(Asn) + L-glutamate + ADP + phosphate + 2 H(+). Its function is as follows. Allows the formation of correctly charged Asn-tRNA(Asn) or Gln-tRNA(Gln) through the transamidation of misacylated Asp-tRNA(Asn) or Glu-tRNA(Gln) in organisms which lack either or both of asparaginyl-tRNA or glutaminyl-tRNA synthetases. The reaction takes place in the presence of glutamine and ATP through an activated phospho-Asp-tRNA(Asn) or phospho-Glu-tRNA(Gln). The sequence is that of Aspartyl/glutamyl-tRNA(Asn/Gln) amidotransferase subunit B from Thermodesulfovibrio yellowstonii (strain ATCC 51303 / DSM 11347 / YP87).